A 266-amino-acid chain; its full sequence is tRNA pseudouridine synthase A (266 aa).

D52 serves as the catalytic Nucleophile. Residue Y113 coordinates substrate.

It belongs to the tRNA pseudouridine synthase TruA family. In terms of assembly, homodimer.

The catalysed reaction is uridine(38/39/40) in tRNA = pseudouridine(38/39/40) in tRNA. Formation of pseudouridine at positions 38, 39 and 40 in the anticodon stem and loop of transfer RNAs. This is tRNA pseudouridine synthase A from Agrobacterium fabrum (strain C58 / ATCC 33970) (Agrobacterium tumefaciens (strain C58)).